The sequence spans 216 residues: UPF0502 protein PFL_4004 (216 aa).

The protein belongs to the UPF0502 family.

This chain is UPF0502 protein PFL_4004, found in Pseudomonas fluorescens (strain ATCC BAA-477 / NRRL B-23932 / Pf-5).